Here is a 466-residue protein sequence, read N- to C-terminus: 23S rRNA (uracil(1939)-C(5))-methyltransferase RlmD (466 aa).

Positions Lys11 to Lys69 constitute a TRAM domain. Cys82, Cys88, Cys91, and Cys184 together coordinate [4Fe-4S] cluster. S-adenosyl-L-methionine-binding residues include Gln287, Phe316, Asn321, Glu337, Asn364, and Asp385. Cys411 (nucleophile) is an active-site residue.

This sequence belongs to the class I-like SAM-binding methyltransferase superfamily. RNA M5U methyltransferase family. RlmD subfamily.

It carries out the reaction uridine(1939) in 23S rRNA + S-adenosyl-L-methionine = 5-methyluridine(1939) in 23S rRNA + S-adenosyl-L-homocysteine + H(+). Its function is as follows. Catalyzes the formation of 5-methyl-uridine at position 1939 (m5U1939) in 23S rRNA. The protein is 23S rRNA (uracil(1939)-C(5))-methyltransferase RlmD of Photobacterium profundum (strain SS9).